The sequence spans 92 residues: Small ribosomal subunit protein uS19c (92 aa).

It belongs to the universal ribosomal protein uS19 family.

It is found in the plastid. Its subcellular location is the chloroplast. In terms of biological role, protein S19 forms a complex with S13 that binds strongly to the 16S ribosomal RNA. This is Small ribosomal subunit protein uS19c from Nicotiana tomentosiformis (Tobacco).